Consider the following 186-residue polypeptide: Large ribosomal subunit protein bL9 (186 aa).

Residues 153–186 form a disordered region; the sequence is ELRQVKSQSQKSQQQEAKQNEVGEATDSDKADQK. A compositionally biased stretch (low complexity) spans 157-169; the sequence is VKSQSQKSQQQEA.

It belongs to the bacterial ribosomal protein bL9 family.

Functionally, binds to the 23S rRNA. The protein is Large ribosomal subunit protein bL9 of Wolbachia sp. subsp. Brugia malayi (strain TRS).